The sequence spans 384 residues: G protein-coupled receptor 88 (384 aa).

The Extracellular portion of the chain corresponds to 1–35; the sequence is MTNSSSTSTSTTTGGSLLLLCEEEESWAGRRIPVS. An N-linked (GlcNAc...) asparagine glycan is attached at Asn-3. The helical transmembrane segment at 36-56 threads the bilayer; sequence LLYSGLAIGGTLANGMVIYLV. The Cytoplasmic segment spans residues 57–73; the sequence is SSFRKLQTTSNAFIVNG. The chain crosses the membrane as a helical span at residues 74 to 94; it reads CAADLSVCALWMPQEAVLGLL. At 95-116 the chain is on the extracellular side; that stretch reads PAGSAEPPGDWDSGGGSYRLLR. Residues 117–136 form a helical membrane-spanning segment; it reads GGLLGLGLTVSLLSHCLVAL. The Cytoplasmic segment spans residues 137-158; the sequence is NRYLLITRAPATYQVLYQRRHT. A helical transmembrane segment spans residues 159 to 179; it reads AGMLALSWALALGLVLLLPPW. Over 180–195 the chain is Extracellular; that stretch reads APKPGAEPPQVHYPAL. Residues 196 to 216 form a helical membrane-spanning segment; sequence LAAGALLAQTALLLHCYLGIV. Over 217 to 285 the chain is Cytoplasmic; the sequence is RRVRVSVKRV…RAQRRLSGLS (69 aa). A helical membrane pass occupies residues 286–306; it reads VLLLCCVFLLATQPLVWVSLA. Over 307 to 310 the chain is Extracellular; sequence SGFS. The chain crosses the membrane as a helical span at residues 311–331; it reads LPVPWGVQAASWLLCCALSAL. Over 332–384 the chain is Cytoplasmic; it reads NPLLYTWRNEEFRRSVRSVLPGVGDAAAAAAAATAVPAMSQAQLGTRAAGQHW.

Belongs to the G-protein coupled receptor 1 family. In terms of tissue distribution, expressed predominantly in the striatum. Expressed also in olfactory tubercle, nucleus accumbens, amygdala, and neocortex. Spinal cord, pons, and medulla expression remains discrete. Also expressed in peripheral tissues, including adrenal cortex (16 dpc to 21 dpc) and cochlear ganglia (19 dpc to P3) and also at moderate levels in retina (18 dpc to 19 dpc) and spleen (21 dpc to P7).

It is found in the cell membrane. The protein resides in the cell projection. Its subcellular location is the cilium membrane. It localises to the cytoplasm. The protein localises to the nucleus. In terms of biological role, orphan G protein-coupled receptor implicated in a large repertoire of behavioral responses that engage motor activities, spatial learning, and emotional processing. May play a role in the regulation of cognitive and motor function. Couples with the heterotrimeric G protein complex of the G(i) subfamily, consisting of GNAI1, GNB1 and GNG2, thereby acting through a G(i)-mediated pathway. Plays a role in the attenuation of D1 dopamine receptor (D1R)-mediated cAMP response in ciliated cells. In non-ciliated cells, involved in the inhibition of the beta-2 adrenergic receptor (B2AR) response. The polypeptide is G protein-coupled receptor 88 (Gpr88) (Rattus norvegicus (Rat)).